The following is a 551-amino-acid chain: Serendipity locus protein alpha (551 aa).

Its subcellular location is the cytoplasm. It localises to the cell membrane. Its function is as follows. Required for the cellularization of the syncytial blastoderm embryo. Involved in the localization of the actin filaments just prior to and during plasma membrane invagination. Sry-alpha together with nullo and bnk may provide auxiliary functions, by acting both to stabilize a large and dynamic microfilament structure and regulate its functions. In Drosophila pseudoobscura pseudoobscura (Fruit fly), this protein is Serendipity locus protein alpha (Sry-alpha).